Consider the following 289-residue polypeptide: tRNA dimethylallyltransferase (289 aa).

9 to 16 provides a ligand contact to ATP; the sequence is GTTASGKT. 11–16 contributes to the substrate binding site; sequence TASGKT. The interval 34-37 is interaction with substrate tRNA; sequence DSLC.

It belongs to the IPP transferase family. Monomer. It depends on Mg(2+) as a cofactor.

The catalysed reaction is adenosine(37) in tRNA + dimethylallyl diphosphate = N(6)-dimethylallyladenosine(37) in tRNA + diphosphate. Catalyzes the transfer of a dimethylallyl group onto the adenine at position 37 in tRNAs that read codons beginning with uridine, leading to the formation of N6-(dimethylallyl)adenosine (i(6)A). This chain is tRNA dimethylallyltransferase, found in Campylobacter jejuni (strain RM1221).